The following is a 137-amino-acid chain: Basic phospholipase A2 beta-bungarotoxin A-AL4 chain (137 aa).

A signal peptide spans 1 to 10; that stretch reads LAVCVSLLGA. Residues 11-18 constitute a propeptide that is removed on maturation; sequence ANIPPQHL. Disulfide bonds link cysteine 45–cysteine 137, cysteine 47–cysteine 63, cysteine 62–cysteine 118, cysteine 69–cysteine 111, cysteine 79–cysteine 104, and cysteine 97–cysteine 109. Ca(2+) is bound by residues tyrosine 46, glycine 48, and glycine 50. The active site involves histidine 66. Position 67 (aspartate 67) interacts with Ca(2+). Residue aspartate 112 is part of the active site.

This sequence belongs to the phospholipase A2 family. Group I subfamily. D49 sub-subfamily. As to quaternary structure, heterodimer; disulfide-linked. The A chains have phospholipase A2 activity and the B chains show homology with the basic protease inhibitors. Requires Ca(2+) as cofactor. In terms of tissue distribution, expressed by the venom gland.

It localises to the secreted. It carries out the reaction a 1,2-diacyl-sn-glycero-3-phosphocholine + H2O = a 1-acyl-sn-glycero-3-phosphocholine + a fatty acid + H(+). In terms of biological role, snake venom phospholipase A2 (PLA2) that inhibits neuromuscular transmission by blocking acetylcholine release from the nerve termini. PLA2 catalyzes the calcium-dependent hydrolysis of the 2-acyl groups in 3-sn-phosphoglycerides. The sequence is that of Basic phospholipase A2 beta-bungarotoxin A-AL4 chain from Bungarus multicinctus (Many-banded krait).